A 177-amino-acid chain; its full sequence is Protein OPG036 (177 aa).

This sequence belongs to the poxviridae OPG036 family.

Its subcellular location is the host nucleus. In terms of biological role, plays a role in the inhibition of host innate immune response. Within the host nucleus, inhibits activation of interferon-beta promoter by inhibiting IRF3 activation. The sequence is that of Protein OPG036 (OPG036) from Homo sapiens (Human).